The chain runs to 132 residues: Pro-MCH 1 (132 aa).

An N-terminal signal peptide occupies residues 1-24 (MRHSVLSISFAVALFLECYTPSTA). Cysteine 120 and cysteine 129 are disulfide-bonded.

The protein belongs to the melanin-concentrating hormone family. In terms of tissue distribution, pituitary gland. Produced in neurons of lateral basal hypothalamus which project both to the brain and to the neural lobe of the pituitary gland from where MCH is released.

Its function is as follows. Plays a role in skin pigmentation by antagonizing the action of melanotropin alpha. Induces melanin concentration within the melanophores. May participate in the control of the hypothalamo-pituitary adrenal gland axis by inhibiting the release of ACTH. This is Pro-MCH 1 (mch1) from Oncorhynchus mykiss (Rainbow trout).